Reading from the N-terminus, the 309-residue chain is MNRLQVELPGLSLKNPIIPASGCFGFGREYAQFYDLSVLGSIMIKATTEQPRYGNPTPRVAETPGGMLNAIGLQNPGLDKVMNSELPWLEQFDLPIIANVAGSQAEDYVAVAKEISKAPNVHALELNISCPNVKTGGIAFGTNPEIAADLTKRVKEVSEVPVYVKLSPNVANIVEIAKAIETAGADGLTMINTLLGMRLDLKTAKPILANRTGGLSGPAIKPVAIRMVHEVSQAVNIPIIGMGGIETAEDVIEFFYAGASAVAVGTANFIDPFVCPTIIEELPALLDELGFDHISECQGRSWKQTCHSR.

Residues serine 21 and 45–46 (KA) contribute to the FMN site. Substrate is bound by residues lysine 45 and 69–73 (NAIGL). 2 residues coordinate FMN: asparagine 99 and asparagine 127. Position 127 (asparagine 127) interacts with substrate. Cysteine 130 functions as the Nucleophile in the catalytic mechanism. The FMN site is built by lysine 165 and isoleucine 191. 192-193 (NT) is a binding site for substrate. FMN contacts are provided by residues glycine 217, 243-244 (GG), and 265-266 (GT).

This sequence belongs to the dihydroorotate dehydrogenase family. Type 1 subfamily. Heterotetramer of 2 PyrK and 2 PyrD type B subunits. Requires FMN as cofactor.

It is found in the cytoplasm. The catalysed reaction is (S)-dihydroorotate + NAD(+) = orotate + NADH + H(+). It functions in the pathway pyrimidine metabolism; UMP biosynthesis via de novo pathway; orotate from (S)-dihydroorotate (NAD(+) route): step 1/1. Its function is as follows. Catalyzes the conversion of dihydroorotate to orotate with NAD(+) as electron acceptor. This Bacillus cereus (strain B4264) protein is Dihydroorotate dehydrogenase B (NAD(+)), catalytic subunit (pyrD).